The primary structure comprises 70 residues: U-actitoxin-Avd11a (70 aa).

Residues 36 to 70 (CNDYKSSSYCRSVGSRNECGIHKYRMYCRKTCGSC) form the ShKT domain. Disulfide bonds link Cys36–Cys70, Cys45–Cys63, and Cys54–Cys67. The tract at residues 58–59 (KY) is crucial for binding to potassium channels.

This sequence belongs to the sea anemone type 1 potassium channel toxin family. Type 1b subfamily.

It localises to the secreted. The protein localises to the nematocyst. In terms of biological role, inhibits voltage-gated potassium channels (Kv1/KCNA). This chain is U-actitoxin-Avd11a, found in Anemonia viridis (Snakelocks anemone).